The sequence spans 148 residues: Arginine repressor (148 aa).

This sequence belongs to the ArgR family.

Its subcellular location is the cytoplasm. Its pathway is amino-acid biosynthesis; L-arginine biosynthesis [regulation]. In terms of biological role, regulates arginine biosynthesis genes. In Chlorobium phaeobacteroides (strain BS1), this protein is Arginine repressor.